The following is a 256-amino-acid chain: Imidazole glycerol phosphate synthase subunit HisF (256 aa).

Residues Asp12 and Asp131 contribute to the active site.

This sequence belongs to the HisA/HisF family. Heterodimer of HisH and HisF.

It localises to the cytoplasm. It carries out the reaction 5-[(5-phospho-1-deoxy-D-ribulos-1-ylimino)methylamino]-1-(5-phospho-beta-D-ribosyl)imidazole-4-carboxamide + L-glutamine = D-erythro-1-(imidazol-4-yl)glycerol 3-phosphate + 5-amino-1-(5-phospho-beta-D-ribosyl)imidazole-4-carboxamide + L-glutamate + H(+). The protein operates within amino-acid biosynthesis; L-histidine biosynthesis; L-histidine from 5-phospho-alpha-D-ribose 1-diphosphate: step 5/9. IGPS catalyzes the conversion of PRFAR and glutamine to IGP, AICAR and glutamate. The HisF subunit catalyzes the cyclization activity that produces IGP and AICAR from PRFAR using the ammonia provided by the HisH subunit. This is Imidazole glycerol phosphate synthase subunit HisF from Ectopseudomonas mendocina (strain ymp) (Pseudomonas mendocina).